The primary structure comprises 277 residues: Phosphonates import ATP-binding protein PhnC (277 aa).

One can recognise an ABC transporter domain in the interval 3–251 (IKLDKVSARH…RLQALYAQHL (249 aa)). 40–47 (GPSGAGKT) contributes to the ATP binding site.

This sequence belongs to the ABC transporter superfamily. Phosphonates importer (TC 3.A.1.9.1) family. The complex is composed of two ATP-binding proteins (PhnC), two transmembrane proteins (PhnE) and a solute-binding protein (PhnD).

The protein resides in the cell inner membrane. It catalyses the reaction phosphonate(out) + ATP + H2O = phosphonate(in) + ADP + phosphate + H(+). Part of the ABC transporter complex PhnCDE involved in phosphonates import. Responsible for energy coupling to the transport system. In Polaromonas sp. (strain JS666 / ATCC BAA-500), this protein is Phosphonates import ATP-binding protein PhnC.